We begin with the raw amino-acid sequence, 151 residues long: 3-hydroxyacyl-[acyl-carrier-protein] dehydratase FabZ (151 aa).

The active site involves histidine 54.

This sequence belongs to the thioester dehydratase family. FabZ subfamily.

It is found in the cytoplasm. The catalysed reaction is a (3R)-hydroxyacyl-[ACP] = a (2E)-enoyl-[ACP] + H2O. In terms of biological role, involved in unsaturated fatty acids biosynthesis. Catalyzes the dehydration of short chain beta-hydroxyacyl-ACPs and long chain saturated and unsaturated beta-hydroxyacyl-ACPs. This chain is 3-hydroxyacyl-[acyl-carrier-protein] dehydratase FabZ, found in Erwinia tasmaniensis (strain DSM 17950 / CFBP 7177 / CIP 109463 / NCPPB 4357 / Et1/99).